We begin with the raw amino-acid sequence, 157 residues long: uncharacterized protein (157 aa).

The first 23 residues, 1-23 (MEALRRAHEATLRLLLCRPWASG), serve as a signal peptide directing secretion.

Its subcellular location is the secreted. This is an uncharacterized protein from Mus musculus (Mouse).